A 457-amino-acid chain; its full sequence is DDB1- and CUL4-associated factor 10 (457 aa).

4 WD repeats span residues 65–104 (RTHG…HIKT), 108–146 (AHED…SKVC), 150–189 (GHTS…EDGC), and 195–234 (FHTR…KSLE). Over residues 246–265 (TASTSDMTSTSSDTRPSSSP) the composition is skewed to low complexity. A disordered region spans residues 246-304 (TASTSDMTSTSSDTRPSSSPCHNSDLGPLFEKHMSRSSQREGASPRNSLEVLTPEVPGE). Polar residues predominate over residues 281–292 (RSSQREGASPRN). WD repeat units follow at residues 306–346 (DRGN…QEGA), 368–406 (VGRG…KELV), and 424–457 (SHKD…QPKF).

This sequence belongs to the WD repeat DCAF10 family.

It participates in protein modification; protein ubiquitination. Its function is as follows. May function as a substrate receptor for CUL4-DDB1 E3 ubiquitin-protein ligase complex. This Xenopus tropicalis (Western clawed frog) protein is DDB1- and CUL4-associated factor 10 (dcaf10).